A 175-amino-acid chain; its full sequence is S-fimbrial protein subunit SfaG (175 aa).

Residues 1–27 (MVKDIIKTVTFSCMLAGSMFVTCHVCA) form the signal peptide. The cysteines at positions 43 and 83 are disulfide-linked.

It belongs to the fimbrial protein family.

It is found in the fimbrium. Its function is as follows. Fimbriae (also called pili), polar filaments radiating from the surface of the bacterium to a length of 0.5-1.5 micrometers and numbering 100-300 per cell, enable bacteria to colonize the epithelium of specific host organs. In terms of biological role, a minor fimbrial subunit. This protein is necessary for full expression of S-specific binding. S-fimbrial adhesins enable pathogenic E.coli causing urinary-tract infections or newborn meningitis to attach to glycoproteins terminating with alpha-sialic acid-(2-3)-beta-Gal. This Escherichia coli O6:K15:H31 (strain 536 / UPEC) protein is S-fimbrial protein subunit SfaG (sfaG).